The chain runs to 180 residues: Translation initiation factor IF-3 (180 aa).

This sequence belongs to the IF-3 family. Monomer.

The protein localises to the cytoplasm. Functionally, IF-3 binds to the 30S ribosomal subunit and shifts the equilibrium between 70S ribosomes and their 50S and 30S subunits in favor of the free subunits, thus enhancing the availability of 30S subunits on which protein synthesis initiation begins. This is Translation initiation factor IF-3 from Salmonella typhi.